A 300-amino-acid polypeptide reads, in one-letter code: Jacalin-related lectin 32 (300 aa).

A2 carries the N-acetylalanine modification. 2 consecutive Jacalin-type lectin domains span residues A2 to T146 and A154 to P297.

The protein belongs to the jacalin lectin family.

In terms of biological role, involved in gametophytic development. In Arabidopsis thaliana (Mouse-ear cress), this protein is Jacalin-related lectin 32 (JAL32).